A 399-amino-acid polypeptide reads, in one-letter code: Protein shisa-8 (399 aa).

The signal sequence occupies residues Met-1–Ala-36. Residues Gly-37 to Ser-136 lie on the Extracellular side of the membrane. N-linked (GlcNAc...) asparagine glycosylation is present at Asn-73. A helical membrane pass occupies residues His-137–Ala-157. Over Arg-158–Val-399 the chain is Cytoplasmic. 2 disordered regions span residues Gly-207–Leu-248 and Phe-378–Val-399. Over residues Leu-389–Val-399 the composition is skewed to polar residues.

Belongs to the shisa family. In terms of assembly, interacts with AMPAR subunits GRIA1 and GRIA2. As to expression, brain-specific. Highly expressed in cerebellum and olfactory bulb.

Its subcellular location is the membrane. Functionally, may regulate trafficking and current kinetics of AMPA-type glutamate receptor (AMPAR) at synapses. In Mus musculus (Mouse), this protein is Protein shisa-8.